Here is a 268-residue protein sequence, read N- to C-terminus: Holocytochrome c-type synthase (268 aa).

Over residues 1 to 22 the composition is skewed to low complexity; the sequence is MGLSPSAPAVAVQASNASASPP. Residues 1 to 25 are disordered; that stretch reads MGLSPSAPAVAVQASNASASPPSGC. Gly-2 is lipidated: N-myristoyl glycine. HRM repeat units follow at residues 24–29 and 34–39; these read GCPMHE and GCPVNT.

This sequence belongs to the cytochrome c-type heme lyase family.

It localises to the mitochondrion inner membrane. Its subcellular location is the membrane. The catalysed reaction is holo-[cytochrome c] = apo-[cytochrome c] + heme b. Lyase that catalyzes the covalent linking of the heme group to the cytochrome C apoprotein to produce the mature functional cytochrome. This Homo sapiens (Human) protein is Holocytochrome c-type synthase.